The primary structure comprises 171 residues: Galectin-related protein (171 aa).

The region spanning 38–170 is the Galectin domain; the sequence is PFCGHIKGGM…INGDLQLTKL (133 aa).

Its function is as follows. Does not bind lactose, and may not bind carbohydrates. This is Galectin-related protein (lgalsl) from Xenopus tropicalis (Western clawed frog).